A 1070-amino-acid polypeptide reads, in one-letter code: Carbamoyl phosphate synthase large chain (1070 aa).

Residues 1-401 are carboxyphosphate synthetic domain; sequence MPKRDDIKTI…ALLKAVRSLE (401 aa). Residues Arg-129, Arg-169, Gly-175, Gly-176, Lys-208, Ile-210, Glu-215, Gly-241, Ile-242, His-243, Gln-284, and Glu-298 each coordinate ATP. Positions 133–327 constitute an ATP-grasp 1 domain; the sequence is RDLMNELGEP…IAKLAAKIAV (195 aa). Gln-284, Glu-298, and Asn-300 together coordinate Mg(2+). Mn(2+) contacts are provided by Gln-284, Glu-298, and Asn-300. Residues 402–546 form an oligomerization domain region; the sequence is IGADHLLLEE…YSTYEEENES (145 aa). Positions 547–929 are carbamoyl phosphate synthetic domain; the sequence is TRSAKESVIV…ALYKGFVASG (383 aa). The ATP-grasp 2 domain maps to 671-861; that stretch reads EKALEILQIP…MANVATRVIL (191 aa). ATP contacts are provided by Arg-707, Arg-746, Val-748, Glu-752, Gly-777, Val-778, His-779, Ser-780, Gln-820, and Glu-832. 3 residues coordinate Mg(2+): Gln-820, Glu-832, and Asn-834. Positions 820, 832, and 834 each coordinate Mn(2+). One can recognise an MGS-like domain in the interval 930–1070; the sequence is TTMHDYGTVL…SEVKQPKARV (141 aa). The allosteric domain stretch occupies residues 930–1070; sequence TTMHDYGTVL…SEVKQPKARV (141 aa).

Belongs to the CarB family. As to quaternary structure, composed of two chains; the small (or glutamine) chain promotes the hydrolysis of glutamine to ammonia, which is used by the large (or ammonia) chain to synthesize carbamoyl phosphate. Tetramer of heterodimers (alpha,beta)4. Mg(2+) serves as cofactor. The cofactor is Mn(2+).

It catalyses the reaction hydrogencarbonate + L-glutamine + 2 ATP + H2O = carbamoyl phosphate + L-glutamate + 2 ADP + phosphate + 2 H(+). The enzyme catalyses hydrogencarbonate + NH4(+) + 2 ATP = carbamoyl phosphate + 2 ADP + phosphate + 2 H(+). It participates in amino-acid biosynthesis; L-arginine biosynthesis; carbamoyl phosphate from bicarbonate: step 1/1. It functions in the pathway pyrimidine metabolism; UMP biosynthesis via de novo pathway; (S)-dihydroorotate from bicarbonate: step 1/3. In terms of biological role, large subunit of the glutamine-dependent carbamoyl phosphate synthetase (CPSase). CPSase catalyzes the formation of carbamoyl phosphate from the ammonia moiety of glutamine, carbonate, and phosphate donated by ATP, constituting the first step of 2 biosynthetic pathways, one leading to arginine and/or urea and the other to pyrimidine nucleotides. The large subunit (synthetase) binds the substrates ammonia (free or transferred from glutamine from the small subunit), hydrogencarbonate and ATP and carries out an ATP-coupled ligase reaction, activating hydrogencarbonate by forming carboxy phosphate which reacts with ammonia to form carbamoyl phosphate. The sequence is that of Carbamoyl phosphate synthase large chain from Listeria monocytogenes serotype 4b (strain F2365).